We begin with the raw amino-acid sequence, 147 residues long: MEKWNREEFEEVVVNISRVTKVVKGGRRFRFSALVVVGDKKGHVGYGIGKAKEVPDAIKKAIDNAFKNITTVNIKGTTIAHDIEHKYNASKILLKPASQGTGVIAGGAARPVLELAGIQDILTKSLGSNNPATLVRATIEALERIKG.

Residues 9–72 (FEEVVVNISR…DNAFKNITTV (64 aa)) enclose the S5 DRBM domain.

This sequence belongs to the universal ribosomal protein uS5 family. In terms of assembly, part of the 30S ribosomal subunit. Contacts proteins S4 and S8.

In terms of biological role, with S4 and S12 plays an important role in translational accuracy. Its function is as follows. Located at the back of the 30S subunit body where it stabilizes the conformation of the head with respect to the body. This is Small ribosomal subunit protein uS5 from Nitratiruptor sp. (strain SB155-2).